Consider the following 174-residue polypeptide: Peptidyl-prolyl cis-trans isomerase D, mitochondrial (174 aa).

Positions 10–173 (FFQIKQGNTP…AACVIEDCGQ (164 aa)) constitute a PPIase cyclophilin-type domain.

This sequence belongs to the cyclophilin-type PPIase family. PPIase D subfamily.

It is found in the mitochondrion. The enzyme catalyses [protein]-peptidylproline (omega=180) = [protein]-peptidylproline (omega=0). Its activity is regulated as follows. Binds cyclosporin A (CsA). CsA mediates some of its effects via an inhibitory action on PPIase. Functionally, PPIases accelerate the folding of proteins. It catalyzes the cis-trans isomerization of proline imidic peptide bonds in oligopeptides. This Dictyostelium discoideum (Social amoeba) protein is Peptidyl-prolyl cis-trans isomerase D, mitochondrial (cypD).